The following is a 189-amino-acid chain: Cytidylate kinase (189 aa).

7–15 provides a ligand contact to ATP; sequence GPPGSGKTS.

Belongs to the cytidylate kinase family. Type 2 subfamily.

The protein localises to the cytoplasm. It carries out the reaction CMP + ATP = CDP + ADP. The catalysed reaction is dCMP + ATP = dCDP + ADP. The protein is Cytidylate kinase of Saccharolobus islandicus (strain L.S.2.15 / Lassen #1) (Sulfolobus islandicus).